We begin with the raw amino-acid sequence, 166 residues long: MAEIGEFLKKYAGFCGLLPPSVDNSLLDFLANLPIILVFLITMPVRFFICIFAGLAKVNPICVLINLLPPLAIAIPFVTAQTPPVCSTQCQYCQSGKGECLNYNPTIAKYFTQCEKQLSVLNKIFCLVGIIIADVLNPILAFINPLIYLAIHKVICLNTNPCICGL.

3 helical membrane-spanning segments follow: residues 35 to 55 (IILV…FAGL), 60 to 80 (PICV…FVTA), and 124 to 144 (IFCL…AFIN).

Its subcellular location is the host membrane. This is Putative transmembrane protein ORF166 from Acidianus convivator (ABV).